We begin with the raw amino-acid sequence, 353 residues long: Phosphate acyltransferase (353 aa).

This sequence belongs to the PlsX family. In terms of assembly, homodimer. Probably interacts with PlsY.

It is found in the cytoplasm. The catalysed reaction is a fatty acyl-[ACP] + phosphate = an acyl phosphate + holo-[ACP]. The protein operates within lipid metabolism; phospholipid metabolism. In terms of biological role, catalyzes the reversible formation of acyl-phosphate (acyl-PO(4)) from acyl-[acyl-carrier-protein] (acyl-ACP). This enzyme utilizes acyl-ACP as fatty acyl donor, but not acyl-CoA. The chain is Phosphate acyltransferase from Bradyrhizobium sp. (strain BTAi1 / ATCC BAA-1182).